We begin with the raw amino-acid sequence, 120 residues long: MLPSRYRLRRSSDFKAVLRRGRRVAGRYIVVYLSTSDTDRPGPQAGFVVGRNVGGAVVRNRIRRRLRHIVAARLAVIPARKRIVVRALPAAAAASFAELAAEFDRLLGRLTQTKNSQGTS.

Belongs to the RnpA family. As to quaternary structure, consists of a catalytic RNA component (M1 or rnpB) and a protein subunit.

It catalyses the reaction Endonucleolytic cleavage of RNA, removing 5'-extranucleotides from tRNA precursor.. Functionally, RNaseP catalyzes the removal of the 5'-leader sequence from pre-tRNA to produce the mature 5'-terminus. It can also cleave other RNA substrates such as 4.5S RNA. The protein component plays an auxiliary but essential role in vivo by binding to the 5'-leader sequence and broadening the substrate specificity of the ribozyme. The protein is Ribonuclease P protein component of Acidothermus cellulolyticus (strain ATCC 43068 / DSM 8971 / 11B).